Here is a 668-residue protein sequence, read N- to C-terminus: E3 ubiquitin-protein ligase RNF139 (668 aa).

Alanine 2 is subject to N-acetylalanine. 11 helical membrane-spanning segments follow: residues 51-71 (IGLQ…VLIL), 85-105 (AFLL…HIDF), 125-145 (SLWM…VTLL), 154-174 (LMIL…PLHI), 178-198 (VVLM…AVKL), 293-313 (GMSA…LAFI), 323-343 (LGFV…LSGL), 356-376 (MCLL…PVLM), 390-410 (FPVL…SYVL), 420-440 (LFAV…SLTV), and 470-490 (IIEF…MMFE). The RING-type; atypical zinc-finger motif lies at 547-586 (CAICYHEFTTSARITPCNHYFHALCLRKWLYIQDTCPMCH). The interval 602–668 (SNNNGFIAPN…AAAEFNDDTD (67 aa)) is disordered. Residues 618–630 (EALREDAAGSDRE) show a composition bias toward basic and acidic residues. Residues 631–641 (LNEDDSTDCDD) show a composition bias toward acidic residues. The residue at position 636 (serine 636) is a Phosphoserine. Residues threonine 637 and threonine 667 each carry the phosphothreonine modification.

Interacts with VHL. Interacts with MHC class I and HM13. Component of SCAP-SREBP complex composed of SREBF2, SCAP and RNF139; the complex hampers the interaction between SCAP and SEC24B, thereby reducing SREBF2 proteolytic processing. Interacts with SREBF2 (via C-terminal domain). Interacts with SCAP; the interaction inhibits the interaction of SCAP with SEC24B and hampering the ER to Golgi transport of the SCAP-SREBP complex. Interacts with SEC24B. Interacts with INSIG1 and INSIG2. Interacts with EIF3F and EIF3H; the interaction leads to protein translation inhibitions in a ubiquitination-dependent manner. Interacts with XBP1 isoform 1; the interaction induces ubiquitination and degradation of XBP1 isoform 1. Interacts with AUP1, AMFR and UBE2G2; interaction with AUP1 facilitates interaction of RNF139 with ubiquitin-conjugating enzyme UBE2G2 and ubiquitin ligase AMFR/gp78, leading to sterol-induced ubiquitination of HMGCR and its subsequent proteasomal degradation. Post-translationally, autoubiquitinated. Ubiquitination is induced by sterol and leads to ist degradation via the ubiquitin-proteasome pathway.

Its subcellular location is the endoplasmic reticulum membrane. It catalyses the reaction S-ubiquitinyl-[E2 ubiquitin-conjugating enzyme]-L-cysteine + [acceptor protein]-L-lysine = [E2 ubiquitin-conjugating enzyme]-L-cysteine + N(6)-ubiquitinyl-[acceptor protein]-L-lysine.. The protein operates within protein modification; protein ubiquitination. E3-ubiquitin ligase; acts as a negative regulator of cell proliferation through mechanisms involving G2/M arrest and cell death. Required for MHC class I ubiquitination in cells expressing the cytomegalovirus protein US2 before dislocation from the endoplasmic reticulum (ER). Affects SREBP processing by hindering the SREBP-SCAP complex translocation from the ER to the Golgi, thereby reducing SREBF2 target gene expression. Involved in the sterol-accelerated degradation of HMGCR. This is achieved through binding to INSIG1 and/or INSIG2 at the ER membrane. In addition, interaction of RNF139 with AUP1 facilitates interaction of RNF139 with ubiquitin-conjugating enzyme UBE2G2 and ubiquitin ligase AMFR, leading to ubiquitination of HMGCR. The ubiquitinated HMGCR is then released from the ER by the complex into the cytosol for subsequent destruction. Required for INSIG1 ubiquitination. May be required for EIF3 complex ubiquitination. This chain is E3 ubiquitin-protein ligase RNF139, found in Mus musculus (Mouse).